A 146-amino-acid chain; its full sequence is MSLVAYDSEEEEQTSLVNENNDIKGRSEEPHWKIPNSPKAEVDTELEKKIKQFIKLKAKGIHFHTRLSENENFRNPKLLDNLQDFLDIKEPRGTMISKDMWDPTDFHKNVYASALSKSQDEMIARRENYQKHDRTEIKFQTSQHPK.

The interval 1–40 is disordered; that stretch reads MSLVAYDSEEEEQTSLVNENNDIKGRSEEPHWKIPNSPKA. The segment covering 21–32 has biased composition (basic and acidic residues); it reads NDIKGRSEEPHW.

It is found in the nucleus. Has a role in meiosis. The chain is Meiotically up-regulated gene 151 protein (mug151) from Schizosaccharomyces pombe (strain 972 / ATCC 24843) (Fission yeast).